A 61-amino-acid chain; its full sequence is UPF0181 protein MS1074 (61 aa).

The protein belongs to the UPF0181 family.

The polypeptide is UPF0181 protein MS1074 (Mannheimia succiniciproducens (strain KCTC 0769BP / MBEL55E)).